We begin with the raw amino-acid sequence, 421 residues long: MDALTSSLVRSPIVPSRTSDNGSGSMFLTASGPGFTRSGSSRLQLRLRQNASARSSRSLQSLTTTAKTRRSFVVRASSASNDASSGSSPKPIAPLQLQSPAGQFLSQILVSHPHLVPAAVEQQLEQLQTDRDSQGQNKDSASVPGTDIVLYRRIAELKENERRRTLEEILYALVVQKFMEANVSLVPSVSPSSDPSGRVDTWPTKVEKLERLHSPEMYEMIHNHLALILGSRMGDLNSVAQISKLRVGQVYAASVMYGYFLKRVDQRFQLEKTMKILPGGSDESKTSVEQAEGTATYQAAVSSHPEVGAFAGGVSAKGFGSEIKPSRLRSYVMSFDAETLQRYATIRSREAVGIIEKHTEALFGKPEIVITPEGTVDSSKDEQIKISFGGMKRLVLEAVTFGSFLWDVESHVDARYHFVLN.

Disordered regions lie at residues 1-40 and 74-95; these read MDAL…RSGS and VRAS…IAPL. The N-terminal 75 residues, 1 to 75, are a transit peptide targeting the chloroplast; sequence MDALTSSLVR…AKTRRSFVVR (75 aa). Over residues 16 to 28 the composition is skewed to polar residues; that stretch reads SRTSDNGSGSMFL. Residues 74-88 show a composition bias toward low complexity; that stretch reads VRASSASNDASSGSS.

It localises to the plastid. Its subcellular location is the chloroplast. In Arabidopsis thaliana (Mouse-ear cress), this protein is UV-B-induced protein At3g17800, chloroplastic.